The following is a 586-amino-acid chain: Arginine--tRNA ligase (586 aa).

The short motif at 131–141 (ANPTGPLHVGH) is the 'HIGH' region element.

Belongs to the class-I aminoacyl-tRNA synthetase family. In terms of assembly, monomer.

Its subcellular location is the cytoplasm. It carries out the reaction tRNA(Arg) + L-arginine + ATP = L-arginyl-tRNA(Arg) + AMP + diphosphate. The protein is Arginine--tRNA ligase of Nitrosomonas eutropha (strain DSM 101675 / C91 / Nm57).